A 423-amino-acid polypeptide reads, in one-letter code: Serine hydroxymethyltransferase (423 aa).

(6S)-5,6,7,8-tetrahydrofolate contacts are provided by residues leucine 120 and 124-126 (GHL). At lysine 229 the chain carries N6-(pyridoxal phosphate)lysine. 353–355 (SPF) is a binding site for (6S)-5,6,7,8-tetrahydrofolate.

Belongs to the SHMT family. In terms of assembly, homodimer. Pyridoxal 5'-phosphate is required as a cofactor.

It is found in the cytoplasm. It catalyses the reaction (6R)-5,10-methylene-5,6,7,8-tetrahydrofolate + glycine + H2O = (6S)-5,6,7,8-tetrahydrofolate + L-serine. It participates in one-carbon metabolism; tetrahydrofolate interconversion. It functions in the pathway amino-acid biosynthesis; glycine biosynthesis; glycine from L-serine: step 1/1. Functionally, catalyzes the reversible interconversion of serine and glycine with tetrahydrofolate (THF) serving as the one-carbon carrier. This reaction serves as the major source of one-carbon groups required for the biosynthesis of purines, thymidylate, methionine, and other important biomolecules. Also exhibits THF-independent aldolase activity toward beta-hydroxyamino acids, producing glycine and aldehydes, via a retro-aldol mechanism. The polypeptide is Serine hydroxymethyltransferase (Prochlorococcus marinus (strain AS9601)).